The primary structure comprises 249 residues: Acetylglutamate kinase (249 aa).

Substrate is bound by residues 38 to 39, Arg-60, and Asn-147; that span reads GG.

It belongs to the acetylglutamate kinase family. ArgB subfamily.

Its subcellular location is the cytoplasm. The enzyme catalyses N-acetyl-L-glutamate + ATP = N-acetyl-L-glutamyl 5-phosphate + ADP. Its pathway is amino-acid biosynthesis; L-arginine biosynthesis; N(2)-acetyl-L-ornithine from L-glutamate: step 2/4. Its function is as follows. Catalyzes the ATP-dependent phosphorylation of N-acetyl-L-glutamate. This chain is Acetylglutamate kinase, found in Deinococcus radiodurans (strain ATCC 13939 / DSM 20539 / JCM 16871 / CCUG 27074 / LMG 4051 / NBRC 15346 / NCIMB 9279 / VKM B-1422 / R1).